Consider the following 88-residue polypeptide: HssA/B-like protein 61 (88 aa).

The protein belongs to the hssA/B family.

This Dictyostelium discoideum (Social amoeba) protein is HssA/B-like protein 61 (hssl61).